Reading from the N-terminus, the 343-residue chain is Phosphoribosylformylglycinamidine cyclo-ligase (343 aa).

The protein belongs to the AIR synthase family.

Its subcellular location is the cytoplasm. It carries out the reaction 2-formamido-N(1)-(5-O-phospho-beta-D-ribosyl)acetamidine + ATP = 5-amino-1-(5-phospho-beta-D-ribosyl)imidazole + ADP + phosphate + H(+). The protein operates within purine metabolism; IMP biosynthesis via de novo pathway; 5-amino-1-(5-phospho-D-ribosyl)imidazole from N(2)-formyl-N(1)-(5-phospho-D-ribosyl)glycinamide: step 2/2. The protein is Phosphoribosylformylglycinamidine cyclo-ligase of Staphylococcus epidermidis (strain ATCC 35984 / DSM 28319 / BCRC 17069 / CCUG 31568 / BM 3577 / RP62A).